A 456-amino-acid chain; its full sequence is ATP-dependent protease ATPase subunit HslU (456 aa).

Residues isoleucine 18, 60 to 65, aspartate 270, glutamate 334, and arginine 406 contribute to the ATP site; that span reads GVGKTE.

It belongs to the ClpX chaperone family. HslU subfamily. A double ring-shaped homohexamer of HslV is capped on each side by a ring-shaped HslU homohexamer. The assembly of the HslU/HslV complex is dependent on binding of ATP.

The protein resides in the cytoplasm. ATPase subunit of a proteasome-like degradation complex; this subunit has chaperone activity. The binding of ATP and its subsequent hydrolysis by HslU are essential for unfolding of protein substrates subsequently hydrolyzed by HslV. HslU recognizes the N-terminal part of its protein substrates and unfolds these before they are guided to HslV for hydrolysis. This chain is ATP-dependent protease ATPase subunit HslU, found in Exiguobacterium sibiricum (strain DSM 17290 / CCUG 55495 / CIP 109462 / JCM 13490 / 255-15).